The chain runs to 214 residues: Large ribosomal subunit protein bL25 (214 aa).

Residues 187-214 (AEVAPSIEETVEPEVIKKGKKAEEEEEK) are disordered. Positions 200–214 (EVIKKGKKAEEEEEK) are enriched in basic and acidic residues.

Belongs to the bacterial ribosomal protein bL25 family. CTC subfamily. As to quaternary structure, part of the 50S ribosomal subunit; part of the 5S rRNA/L5/L18/L25 subcomplex. Contacts the 5S rRNA. Binds to the 5S rRNA independently of L5 and L18.

This is one of the proteins that binds to the 5S RNA in the ribosome where it forms part of the central protuberance. In Thermodesulfovibrio yellowstonii (strain ATCC 51303 / DSM 11347 / YP87), this protein is Large ribosomal subunit protein bL25.